Consider the following 126-residue polypeptide: Aspartate 1-decarboxylase (126 aa).

Residue S25 is the Schiff-base intermediate with substrate; via pyruvic acid of the active site. S25 carries the post-translational modification Pyruvic acid (Ser). Substrate is bound at residue T57. The Proton donor role is filled by Y58. 73-75 (GAA) serves as a coordination point for substrate.

It belongs to the PanD family. In terms of assembly, heterooctamer of four alpha and four beta subunits. Pyruvate is required as a cofactor. In terms of processing, is synthesized initially as an inactive proenzyme, which is activated by self-cleavage at a specific serine bond to produce a beta-subunit with a hydroxyl group at its C-terminus and an alpha-subunit with a pyruvoyl group at its N-terminus.

It is found in the cytoplasm. It catalyses the reaction L-aspartate + H(+) = beta-alanine + CO2. The protein operates within cofactor biosynthesis; (R)-pantothenate biosynthesis; beta-alanine from L-aspartate: step 1/1. Catalyzes the pyruvoyl-dependent decarboxylation of aspartate to produce beta-alanine. The sequence is that of Aspartate 1-decarboxylase from Chromohalobacter salexigens (strain ATCC BAA-138 / DSM 3043 / CIP 106854 / NCIMB 13768 / 1H11).